Here is a 74-residue protein sequence, read N- to C-terminus: U3-agatoxin-Ao1b (74 aa).

The N-terminal stretch at Met-1–Ala-20 is a signal peptide. The propeptide occupies Ile-21–Arg-34. Disulfide bonds link Cys-37–Cys-53, Cys-44–Cys-58, Cys-52–Cys-68, and Cys-60–Cys-66. Ser-72 carries the post-translational modification Serine amide.

This sequence belongs to the neurotoxin 07 (Beta/delta-agtx) family. 02 (aga-3) subfamily. Expressed by the venom gland.

Its subcellular location is the secreted. Its function is as follows. Insecticidal neurotoxin that induces an irreversible spastic paralysis when injected into insects. Modifies presynaptic voltage-gated sodium channels (Nav), causing them to open at the normal resting potential of the nerve. This leads to spontaneous release of neurotransmitter and repetitive action potentials in motor neurons. This Agelena orientalis (Funnel-web spider) protein is U3-agatoxin-Ao1b.